Consider the following 549-residue polypeptide: Limonene dehydrogenase subunit B (549 aa).

Belongs to the carotenoid/retinoid oxidoreductase family. Heterodimer composed of CtmA and CtmB. FAD serves as cofactor.

The protein resides in the cytoplasm. The enzyme catalyses (4S)-limonene + A + H2O = (4S)-perillyl alcohol + AH2. It catalyses the reaction (4R)-limonene + A + H2O = (4R)-perillyl alcohol + AH2. It participates in terpene metabolism; monoterpene degradation. With respect to regulation, the presence of molecular oxygen causes a 40% reduction in specific activity. Functionally, involved in the degradation of the cyclic monoterpene limonene. Catalyzes the oxidation of limonene at the primary methyl group, forming perillyl alcohol. Hydroxylates the R- and S-enantiomers to their respective enantiomeric form of perillyl alcohol at a similar rate. Native CtmAB oxidizes a wide range of monocyclic monoterpenes containing the allylic methyl group motif (1-methyl-cyclohex-1-ene). Can also catalyze the reverse reaction, the reduction of perillyl alcohol to limonene, but with lower efficiency. Cannot use molecular oxygen as an electron acceptor. The natural electron acceptor is likely a heterodimeric electron transfer flavoprotein (ETF). This is Limonene dehydrogenase subunit B from Castellaniella defragrans (strain DSM 12143 / CCUG 39792 / 65Phen) (Alcaligenes defragrans).